The following is a 141-amino-acid chain: Ribonuclease P protein component (141 aa).

Disordered stretches follow at residues 37–56 (RTEE…VGFT) and 114–141 (RRIT…VNGK). Basic and acidic residues predominate over residues 114–124 (RRITAKGERRS).

It belongs to the RnpA family. As to quaternary structure, consists of a catalytic RNA component (M1 or rnpB) and a protein subunit.

It carries out the reaction Endonucleolytic cleavage of RNA, removing 5'-extranucleotides from tRNA precursor.. Its function is as follows. RNaseP catalyzes the removal of the 5'-leader sequence from pre-tRNA to produce the mature 5'-terminus. It can also cleave other RNA substrates such as 4.5S RNA. The protein component plays an auxiliary but essential role in vivo by binding to the 5'-leader sequence and broadening the substrate specificity of the ribozyme. This chain is Ribonuclease P protein component, found in Brucella melitensis biotype 2 (strain ATCC 23457).